The following is a 686-amino-acid chain: DNA ligase (686 aa).

Residues 34–38, 83–84, and glutamate 120 contribute to the NAD(+) site; these read DAEYD and SI. Lysine 122 functions as the N6-AMP-lysine intermediate in the catalytic mechanism. The NAD(+) site is built by arginine 143, glutamate 180, lysine 298, and lysine 322. Cysteine 420, cysteine 423, cysteine 438, and cysteine 444 together coordinate Zn(2+). In terms of domain architecture, BRCT spans 603–686; it reads QSGGILSGKT…ALLGSNKKNG (84 aa).

The protein belongs to the NAD-dependent DNA ligase family. LigA subfamily. Mg(2+) serves as cofactor. Mn(2+) is required as a cofactor.

It carries out the reaction NAD(+) + (deoxyribonucleotide)n-3'-hydroxyl + 5'-phospho-(deoxyribonucleotide)m = (deoxyribonucleotide)n+m + AMP + beta-nicotinamide D-nucleotide.. DNA ligase that catalyzes the formation of phosphodiester linkages between 5'-phosphoryl and 3'-hydroxyl groups in double-stranded DNA using NAD as a coenzyme and as the energy source for the reaction. It is essential for DNA replication and repair of damaged DNA. The protein is DNA ligase of Thiobacillus denitrificans (strain ATCC 25259 / T1).